The primary structure comprises 889 residues: DNA gyrase subunit A (889 aa).

Residues 35–501 enclose the Topo IIA-type catalytic domain; it reads LPDVRDGLKP…GFEDLEDEDL (467 aa). The O-(5'-phospho-DNA)-tyrosine intermediate role is filled by tyrosine 123. Positions 528-534 match the GyrA-box motif; that stretch reads QNRGGRG. The segment at 811–889 is disordered; sequence KEDAEDETNE…IQQSSDEDEE (79 aa). A compositionally biased stretch (acidic residues) spans 813 to 823; it reads DAEDETNEDEQ. Residues 863 to 875 are compositionally biased toward basic and acidic residues; sequence DGRIEVRQDFMDR. Residues 876-889 are compositionally biased toward acidic residues; that stretch reads VEEDIQQSSDEDEE.

It belongs to the type II topoisomerase GyrA/ParC subunit family. Heterotetramer, composed of two GyrA and two GyrB chains. In the heterotetramer, GyrA contains the active site tyrosine that forms a transient covalent intermediate with DNA, while GyrB binds cofactors and catalyzes ATP hydrolysis.

The protein resides in the cytoplasm. The enzyme catalyses ATP-dependent breakage, passage and rejoining of double-stranded DNA.. Its function is as follows. A type II topoisomerase that negatively supercoils closed circular double-stranded (ds) DNA in an ATP-dependent manner to modulate DNA topology and maintain chromosomes in an underwound state. Negative supercoiling favors strand separation, and DNA replication, transcription, recombination and repair, all of which involve strand separation. Also able to catalyze the interconversion of other topological isomers of dsDNA rings, including catenanes and knotted rings. Type II topoisomerases break and join 2 DNA strands simultaneously in an ATP-dependent manner. The chain is DNA gyrase subunit A from Staphylococcus aureus (strain Mu50 / ATCC 700699).